A 215-amino-acid chain; its full sequence is Sodium channel regulatory subunit beta-2 (215 aa).

A signal peptide spans 1-29 (MHRDAWLPRPAFSLTGLSLFFSLVPPGRS). Over 30 to 157 (MEVTVPATLN…XEEPPERDST (128 aa)) the chain is Extracellular. An Ig-like C2-type domain is found at 32–154 (VTVPATLNVL…QVLXEEPPER (123 aa)). N-linked (GlcNAc...) asparagine glycosylation is found at Asn-42, Asn-66, and Asn-74. 2 cysteine pairs are disulfide-bonded: Cys-50–Cys-127 and Cys-72–Cys-75. A helical transmembrane segment spans residues 158–179 (VAVIVGASVGGFLAVVILVLMV). Residues 180-215 (VKCVRRKKEQKLSTDDLKTEEEGKTDGEGNPDDGAK) are Cytoplasmic-facing. Positions 187-215 (KEQKLSTDDLKTEEEGKTDGEGNPDDGAK) are disordered. Positions 189-215 (QKLSTDDLKTEEEGKTDGEGNPDDGAK) are enriched in basic and acidic residues. Ser-192 bears the Phosphoserine mark. Thr-204 is modified (phosphothreonine).

It belongs to the sodium channel auxiliary subunit SCN2B (TC 8.A.17) family. A voltage-gated sodium (Nav) channel consists of an ion-conducting pore-forming alpha subunit functional on its own that is regulated by one or more beta subunits. The beta subunit SCN2B is disulfide-linked to the pore-forming alpha subunit. Interacts with SCN1A; regulatory subunit of SCN1A/Nav1.1. Interacts with SCN2A; regulatory subunit of SCN2A/Nav1.2. Interacts with SCN3A; regulatory subunit of SCN3A/Nav1.3. Interacts with SCN5A; regulatory subunit of SCN5A/Nav1.5. Interacts with SCN8A; regulatory subunit of SCN8A/Nav1.6. Interacts with SCN9A; regulatory subunit of SCN9A/Nav1.7. Interacts with SCN10A; regulatory subunit of SCN10A/Nav1.8. Interacts with TNR; may play a crucial role in clustering and regulation of activity of SCN2B-containing Nav channels at nodes of Ranvier.

The protein localises to the cell membrane. The protein resides in the cell projection. It localises to the axon. In terms of biological role, regulatory subunit of multiple voltage-gated sodium (Nav) channels, that directly mediate the depolarization of excitable membranes. Navs, also called VGSCs (voltage-gated sodium channels) or VDSCs (voltage-dependent sodium channels), operate by switching between closed and open conformations depending on the voltage difference across the membrane. In the open conformation they allow Na(+) ions to selectively pass through the pore, along their electrochemical gradient. The influx of Na+ ions provokes membrane depolarization, initiating the propagation of electrical signals throughout cells and tissues. The accessory beta subunits participate in localization and functional modulation of the Nav channels. Modulates the activity of SCN1A/Nav1.1, SCN2A/Nav1.2, SCN2A/Nav1.3, SCN5A/Nav1.5, SCN8A/Nav1.6, SCN9A/Nav1.7 and SCN10A/Nav1.8. This is Sodium channel regulatory subunit beta-2 from Canis lupus familiaris (Dog).